Here is a 199-residue protein sequence, read N- to C-terminus: UPF0301 protein Ajs_3573 (199 aa).

Belongs to the UPF0301 (AlgH) family.

In Acidovorax sp. (strain JS42), this protein is UPF0301 protein Ajs_3573.